A 301-amino-acid polypeptide reads, in one-letter code: MYTIAALYHFTRFADPADLKPALLDLCLAQGVKGTLLLAKEGINGTIAGPRAGIDAVLAHIRALPGCSDLEWKEATSDHPPFGKMKVRLKQEIVTMGQPDVDPRARVGHYVEPEDWNDLIRSDDVVLIDTRNDYEVAIGTFEGAIDPMTESFRDFPAWWEANKERFHNKRVAMFCTGGIRCEKSTNYLLGQGVEDVYHLKGGILRYLEEVPAENSTWQGECFVFDNRVSVGHGLVEGPHELCHGCRRPILPEDRNRPEYEHGVSCHLCIDETSEADKMRFRERQKQIALARARGEDHLATH.

Residues 121–215 (RSDDVVLIDT…YLEEVPAENS (95 aa)) form the Rhodanese domain. Catalysis depends on Cys-175, which acts as the Cysteine persulfide intermediate.

This sequence belongs to the TrhO family.

It carries out the reaction uridine(34) in tRNA + AH2 + O2 = 5-hydroxyuridine(34) in tRNA + A + H2O. Its function is as follows. Catalyzes oxygen-dependent 5-hydroxyuridine (ho5U) modification at position 34 in tRNAs. In Ruegeria pomeroyi (strain ATCC 700808 / DSM 15171 / DSS-3) (Silicibacter pomeroyi), this protein is tRNA uridine(34) hydroxylase.